The chain runs to 77 residues: Putative defensin-like protein 158 (77 aa).

The first 24 residues, 1 to 24 (MANISWSHFLILMLVFSVVKKGKG), serve as a signal peptide directing secretion. Disulfide bonds link Cys31/Cys77, Cys41/Cys60, Cys46/Cys71, and Cys50/Cys73.

The protein belongs to the DEFL family.

Its subcellular location is the secreted. The sequence is that of Putative defensin-like protein 158 (LCR23) from Arabidopsis thaliana (Mouse-ear cress).